The following is a 409-amino-acid chain: Elongation factor Tu, chloroplastic (409 aa).

The tr-type G domain occupies 10 to 214; the sequence is KPHVNIGTIG…NVDSYIPTPA (205 aa). The G1 stretch occupies residues 19–26; it reads GHVDHGKT. 19-26 is a binding site for GTP; it reads GHVDHGKT. Position 26 (threonine 26) interacts with Mg(2+). The segment at 60 to 64 is G2; sequence GITIN. The tract at residues 81 to 84 is G3; sequence DCPG. GTP-binding positions include 81–85 and 136–139; these read DCPGH and NKED. Positions 136–139 are G4; sequence NKED. Residues 174–176 form a G5 region; sequence SAL.

Belongs to the TRAFAC class translation factor GTPase superfamily. Classic translation factor GTPase family. EF-Tu/EF-1A subfamily.

It localises to the plastid. Its subcellular location is the chloroplast. The catalysed reaction is GTP + H2O = GDP + phosphate + H(+). In terms of biological role, GTP hydrolase that promotes the GTP-dependent binding of aminoacyl-tRNA to the A-site of ribosomes during protein biosynthesis. This chain is Elongation factor Tu, chloroplastic (tufA), found in Ostreococcus tauri.